The following is a 613-amino-acid chain: tRNA 5-methylaminomethyl-2-thiouridine biosynthesis bifunctional protein MnmC (613 aa).

Positions 1-225 (MKKAKLIFKD…KREMIKAYLE (225 aa)) are tRNA (mnm(5)s(2)U34)-methyltransferase. The tract at residues 252–613 (IGAGISSAVL…FLIRKLKKGL (362 aa)) is FAD-dependent cmnm(5)s(2)U34 oxidoreductase.

This sequence in the N-terminal section; belongs to the methyltransferase superfamily. tRNA (mnm(5)s(2)U34)-methyltransferase family. In the C-terminal section; belongs to the DAO family. The cofactor is FAD.

The protein resides in the cytoplasm. It catalyses the reaction 5-aminomethyl-2-thiouridine(34) in tRNA + S-adenosyl-L-methionine = 5-methylaminomethyl-2-thiouridine(34) in tRNA + S-adenosyl-L-homocysteine + H(+). Catalyzes the last two steps in the biosynthesis of 5-methylaminomethyl-2-thiouridine (mnm(5)s(2)U) at the wobble position (U34) in tRNA. Catalyzes the FAD-dependent demodification of cmnm(5)s(2)U34 to nm(5)s(2)U34, followed by the transfer of a methyl group from S-adenosyl-L-methionine to nm(5)s(2)U34, to form mnm(5)s(2)U34. The polypeptide is tRNA 5-methylaminomethyl-2-thiouridine biosynthesis bifunctional protein MnmC (Campylobacter jejuni subsp. jejuni serotype O:6 (strain 81116 / NCTC 11828)).